Reading from the N-terminus, the 239-residue chain is Phosphoribosylaminoimidazole-succinocarboxamide synthase (239 aa).

It belongs to the SAICAR synthetase family.

The catalysed reaction is 5-amino-1-(5-phospho-D-ribosyl)imidazole-4-carboxylate + L-aspartate + ATP = (2S)-2-[5-amino-1-(5-phospho-beta-D-ribosyl)imidazole-4-carboxamido]succinate + ADP + phosphate + 2 H(+). It participates in purine metabolism; IMP biosynthesis via de novo pathway; 5-amino-1-(5-phospho-D-ribosyl)imidazole-4-carboxamide from 5-amino-1-(5-phospho-D-ribosyl)imidazole-4-carboxylate: step 1/2. This is Phosphoribosylaminoimidazole-succinocarboxamide synthase from Campylobacter hominis (strain ATCC BAA-381 / DSM 21671 / CCUG 45161 / LMG 19568 / NCTC 13146 / CH001A).